The primary structure comprises 187 residues: Adenylate kinase (187 aa).

ATP is bound at residue 10–15 (GSGKGT). Positions 30–59 (STGDLLRAEVAAGSPLGLKAKEVMARGDLV) are NMP. Residues Thr31, Arg36, 57-59 (DLV), 85-88 (GYPR), and Gln92 contribute to the AMP site. The tract at residues 126–136 (GRAKAEGREDD) is LID. Residue Arg127 coordinates ATP. AMP contacts are provided by Arg133 and Arg144. Gly172 provides a ligand contact to ATP.

It belongs to the adenylate kinase family. As to quaternary structure, monomer.

Its subcellular location is the cytoplasm. The catalysed reaction is AMP + ATP = 2 ADP. It participates in purine metabolism; AMP biosynthesis via salvage pathway; AMP from ADP: step 1/1. Functionally, catalyzes the reversible transfer of the terminal phosphate group between ATP and AMP. Plays an important role in cellular energy homeostasis and in adenine nucleotide metabolism. The protein is Adenylate kinase of Xanthomonas axonopodis pv. citri (strain 306).